Reading from the N-terminus, the 399-residue chain is Carbamoyl phosphate synthase small chain (399 aa).

The segment at 1 to 209 (MEKFKLLKLG…SAINKKLHTS (209 aa)) is CPSase. L-glutamine contacts are provided by Ser-55, Gly-261, and Gly-263. The Glutamine amidotransferase type-1 domain occupies 213 to 399 (RIIVLDLGVK…VYIIYKSKSS (187 aa)). Cys-289 functions as the Nucleophile in the catalytic mechanism. Residues Leu-290, Gln-293, Asn-329, Gly-331, and Phe-332 each coordinate L-glutamine. Catalysis depends on residues His-372 and Glu-374.

The protein belongs to the CarA family. As to quaternary structure, composed of two chains; the small (or glutamine) chain promotes the hydrolysis of glutamine to ammonia, which is used by the large (or ammonia) chain to synthesize carbamoyl phosphate. Tetramer of heterodimers (alpha,beta)4.

The protein localises to the plastid. Its subcellular location is the chloroplast. It catalyses the reaction hydrogencarbonate + L-glutamine + 2 ATP + H2O = carbamoyl phosphate + L-glutamate + 2 ADP + phosphate + 2 H(+). The enzyme catalyses L-glutamine + H2O = L-glutamate + NH4(+). Its pathway is amino-acid biosynthesis; L-arginine biosynthesis; carbamoyl phosphate from bicarbonate: step 1/1. It functions in the pathway pyrimidine metabolism; UMP biosynthesis via de novo pathway; (S)-dihydroorotate from bicarbonate: step 1/3. Functionally, small subunit of the glutamine-dependent carbamoyl phosphate synthetase (CPSase). CPSase catalyzes the formation of carbamoyl phosphate from the ammonia moiety of glutamine, carbonate, and phosphate donated by ATP, constituting the first step of 2 biosynthetic pathways, one leading to arginine and/or urea and the other to pyrimidine nucleotides. The small subunit (glutamine amidotransferase) binds and cleaves glutamine to supply the large subunit with the substrate ammonia. This chain is Carbamoyl phosphate synthase small chain, found in Cyanidium caldarium (Red alga).